The chain runs to 671 residues: MASSSASATVAVDKATSDLLLGPDWTTNMEICDSVNSLHWQAKDVVKAVKKRLQHKSSRVQLLALTLLETLVKNCGDYLHHQVAEKNILGEMVKIVKKKADMQVRDKILVMVDSWQQAFGGPEGKYPQYYWAYDELRRSGVEFPRRSPDASPIITPPVSHPPLRQPQGGYGVPPAGYGVHQAGYGVPQAGYGIPQAGYGVPQAGYGIPQVGYGMPSGSSRRLDEAMATEVEGLSLSSIESMRDVMDLLGDMLQAVDPSDREAVKDEVIVDLVERCRSNQKKLMQMLTSTGDDELLGRGLDLNDSLQILLAKHDAIASGSPLPVQASGSPLSVQASKPADSSPKSSEAKDSSSIAGSSSPIPATVSTGKSPIDEEYEEEEDEFAQLARRHSKPPASVTTDPTSLESHNAASNALALALPDPPPPVNTTKEQDMIDLLSITLCTPSTPPAPSSQPSPPPPAGSDQNTHIYPQPQPRFDSYVAPWAQQQQPQQPQAQQGYSQHQQHQQQQGYSQPQHSQQQQGYSQLQQPQPQQGYSQSQPQAQVQMQPSTRPQNPYEYPPPPWASTSANAYYTPRANASASYTDTSALAGRSLQQSNSFPTRAGDPQATSTASNSGVSVGQKPFVPSYRLFEDLDVFGSADGKHNKPANSSNGSQNLSGSQTQQSMIGGRKMI.

A2 carries the post-translational modification N-acetylalanine. In terms of domain architecture, VHS spans A15–P144. Residue S147 is modified to Phosphoserine. Positions E229–S317 constitute a GAT domain. Disordered regions lie at residues P320–K620 and G636–I671. The span at A334–A362 shows a compositional bias: low complexity. Over residues D372–F382 the composition is skewed to acidic residues. A compositionally biased stretch (polar residues) spans S395 to S405. Residues N407 to L417 are compositionally biased toward low complexity. Residues S444–A459 show a composition bias toward pro residues. Residues A483–Y554 are compositionally biased toward low complexity. Composition is skewed to polar residues over residues A562–P598 and Q605–S616. At S596 the chain carries Phosphoserine. The segment covering N647 to S663 has biased composition (low complexity).

The protein belongs to the TOM1 family. In terms of tissue distribution, ubiquitously expressed.

It localises to the endosome. The protein resides in the multivesicular body. It is found in the cytoplasm. The protein localises to the early endosome membrane. Its function is as follows. Acts as a gatekeeper for degradative protein sorting to the vacuole. Plays a role in recognition of ubiquitinated PIN2 auxin carrier at the plasma membrane and further to its endocytic sorting. Binds ubiquitin in vitro. Might contribute to the loading of the ESCRT machinery. This is TOM1-like protein 6 from Arabidopsis thaliana (Mouse-ear cress).